Here is a 701-residue protein sequence, read N- to C-terminus: Ubiquitin thioesterase zranb1-A (701 aa).

3 consecutive RanBP2-type zinc fingers follow at residues 3–33, 79–108, and 143–173; these read EHGI…PRPS, PSSK…QRRT, and IKGQ…PTPN. Positions 10, 13, 24, 27, 85, 88, 99, and 102 each coordinate Zn(2+). Residues 108 to 121 are compositionally biased toward polar residues; sequence TRSPTESPQSSGSG. The disordered stretch occupies residues 108-129; that stretch reads TRSPTESPQSSGSGLRSIPSPI. Zn(2+) contacts are provided by cysteine 150, cysteine 153, cysteine 164, and cysteine 167. Residues 198-219 form a disordered region; sequence WRGGCSSSNSQRRSPPTSKRDS. A compositionally biased stretch (polar residues) spans 202–214; it reads CSSSNSQRRSPPT. ANK repeat units lie at residues 253 to 283 and 306 to 333; these read RKTD…SGGD and YTLV…QHAA. In terms of domain architecture, OTU spans 425–585; it reads LYALWNRTAG…RGHFSALVAM (161 aa). Cysteine 436 (nucleophile) is an active-site residue. Histidine 578 (proton acceptor) is an active-site residue.

It belongs to the peptidase C64 family.

Its subcellular location is the cytoplasm. It localises to the nucleus. It carries out the reaction Thiol-dependent hydrolysis of ester, thioester, amide, peptide and isopeptide bonds formed by the C-terminal Gly of ubiquitin (a 76-residue protein attached to proteins as an intracellular targeting signal).. In terms of biological role, ubiquitin thioesterase, which specifically hydrolyzes 'Lys-29'-linked and 'Lys-33'-linked diubiquitin. Also cleaves 'Lys-63'-linked chains, but with 40-fold less efficiency compared to 'Lys-29'-linked ones. Positive regulator of the Wnt signaling pathway that deubiquitinates apc protein, a negative regulator of Wnt-mediated transcription. Acts as a regulator of autophagy by mediating deubiquitination of pik3c3/vps34, thereby promoting autophagosome maturation. Plays a role in the regulation of cell morphology and cytoskeletal organization. Required in the stress fiber dynamics and cell migration. The protein is Ubiquitin thioesterase zranb1-A (zranb1-a) of Xenopus laevis (African clawed frog).